Consider the following 203-residue polypeptide: Ribosome-binding factor A (203 aa).

The span at 119 to 141 (LAEVRRDARPAGDEDPYRRPRTV) shows a compositional bias: basic and acidic residues. The segment at 119–203 (LAEVRRDARP…SPGGDPTAGR (85 aa)) is disordered. The segment covering 142 to 169 (DEDDEDEDEDLVDEFDEFDRVEELDADA) has biased composition (acidic residues).

This sequence belongs to the RbfA family. In terms of assembly, monomer. Binds 30S ribosomal subunits, but not 50S ribosomal subunits or 70S ribosomes.

Its subcellular location is the cytoplasm. Its function is as follows. One of several proteins that assist in the late maturation steps of the functional core of the 30S ribosomal subunit. Associates with free 30S ribosomal subunits (but not with 30S subunits that are part of 70S ribosomes or polysomes). Required for efficient processing of 16S rRNA. May interact with the 5'-terminal helix region of 16S rRNA. The polypeptide is Ribosome-binding factor A (Frankia alni (strain DSM 45986 / CECT 9034 / ACN14a)).